A 196-amino-acid polypeptide reads, in one-letter code: Glycerol-3-phosphate acyltransferase (196 aa).

5 consecutive transmembrane segments (helical) span residues 2–22 (GWWL…SYLI), 51–71 (VVGG…VFIA), 80–100 (LVSL…FMKF), 112–132 (IIFC…LVIV), and 137–156 (YASL…GYLF).

Belongs to the PlsY family. Probably interacts with PlsX.

It is found in the cell inner membrane. The catalysed reaction is an acyl phosphate + sn-glycerol 3-phosphate = a 1-acyl-sn-glycero-3-phosphate + phosphate. Its pathway is lipid metabolism; phospholipid metabolism. In terms of biological role, catalyzes the transfer of an acyl group from acyl-phosphate (acyl-PO(4)) to glycerol-3-phosphate (G3P) to form lysophosphatidic acid (LPA). This enzyme utilizes acyl-phosphate as fatty acyl donor, but not acyl-CoA or acyl-ACP. The sequence is that of Glycerol-3-phosphate acyltransferase from Thermotoga petrophila (strain ATCC BAA-488 / DSM 13995 / JCM 10881 / RKU-1).